A 396-amino-acid chain; its full sequence is DNA polymerase IV (396 aa).

The region spanning Ile2 to Gly182 is the UmuC domain. Mg(2+)-binding residues include Asp6 and Asp100. The active site involves Glu101.

This sequence belongs to the DNA polymerase type-Y family. Monomer. Mg(2+) is required as a cofactor.

The protein localises to the cytoplasm. It catalyses the reaction DNA(n) + a 2'-deoxyribonucleoside 5'-triphosphate = DNA(n+1) + diphosphate. Functionally, poorly processive, error-prone DNA polymerase involved in untargeted mutagenesis. Copies undamaged DNA at stalled replication forks, which arise in vivo from mismatched or misaligned primer ends. These misaligned primers can be extended by PolIV. Exhibits no 3'-5' exonuclease (proofreading) activity. May be involved in translesional synthesis, in conjunction with the beta clamp from PolIII. This chain is DNA polymerase IV, found in Rhodopirellula baltica (strain DSM 10527 / NCIMB 13988 / SH1).